A 254-amino-acid chain; its full sequence is Diphthine synthase (254 aa).

Residues Leu11, Asp86, Ile89, 114–115, Leu166, Leu207, and His232 contribute to the S-adenosyl-L-methionine site; that span reads SV.

This sequence belongs to the diphthine synthase family. Homodimer.

The enzyme catalyses 2-[(3S)-amino-3-carboxypropyl]-L-histidyl-[translation elongation factor 2] + 3 S-adenosyl-L-methionine = diphthine-[translation elongation factor 2] + 3 S-adenosyl-L-homocysteine + 3 H(+). The protein operates within protein modification; peptidyl-diphthamide biosynthesis. Functionally, S-adenosyl-L-methionine-dependent methyltransferase that catalyzes the trimethylation of the amino group of the modified target histidine residue in translation elongation factor 2 (EF-2), to form an intermediate called diphthine. The three successive methylation reactions represent the second step of diphthamide biosynthesis. The sequence is that of Diphthine synthase from Sulfurisphaera tokodaii (strain DSM 16993 / JCM 10545 / NBRC 100140 / 7) (Sulfolobus tokodaii).